The following is a 431-amino-acid chain: Trigger factor (431 aa).

The 86-residue stretch at 165-250 (GDTVVIDFDG…IHELKRKELP (86 aa)) folds into the PPIase FKBP-type domain.

Belongs to the FKBP-type PPIase family. Tig subfamily.

The protein resides in the cytoplasm. The catalysed reaction is [protein]-peptidylproline (omega=180) = [protein]-peptidylproline (omega=0). Involved in protein export. Acts as a chaperone by maintaining the newly synthesized protein in an open conformation. Functions as a peptidyl-prolyl cis-trans isomerase. This chain is Trigger factor, found in Leuconostoc citreum (strain KM20).